The chain runs to 294 residues: Cytidine deaminase (294 aa).

CMP/dCMP-type deaminase domains are found at residues 48 to 168 (DEDA…FGPK) and 186 to 294 (LTGD…TLLA). 89 to 91 (NME) serves as a coordination point for substrate. A Zn(2+)-binding site is contributed by His-102. Residue Glu-104 is the Proton donor of the active site. Positions 129 and 132 each coordinate Zn(2+).

Belongs to the cytidine and deoxycytidylate deaminase family. In terms of assembly, homodimer. Requires Zn(2+) as cofactor.

The catalysed reaction is cytidine + H2O + H(+) = uridine + NH4(+). It carries out the reaction 2'-deoxycytidine + H2O + H(+) = 2'-deoxyuridine + NH4(+). Functionally, this enzyme scavenges exogenous and endogenous cytidine and 2'-deoxycytidine for UMP synthesis. The chain is Cytidine deaminase from Enterobacter sp. (strain 638).